The following is a 291-amino-acid chain: 4-hydroxy-tetrahydrodipicolinate synthase (291 aa).

T45 is a pyruvate binding site. Y133 serves as the catalytic Proton donor/acceptor. Catalysis depends on K161, which acts as the Schiff-base intermediate with substrate. I203 contributes to the pyruvate binding site.

It belongs to the DapA family. In terms of assembly, homotetramer.

The protein localises to the cytoplasm. The catalysed reaction is L-aspartate 4-semialdehyde + pyruvate = (2S,4S)-4-hydroxy-2,3,4,5-tetrahydrodipicolinate + H2O + H(+). It participates in amino-acid biosynthesis; L-lysine biosynthesis via DAP pathway; (S)-tetrahydrodipicolinate from L-aspartate: step 3/4. Is allosterically feedback inhibited by lysine; the N.meningitidis enzyme is significantly more sensitive to lysine than the E.coli enzyme. Shows substrate inhibition by (S)-ASA, with a Ki of 1.7 mM. In terms of biological role, catalyzes the condensation of (S)-aspartate-beta-semialdehyde [(S)-ASA] and pyruvate to 4-hydroxy-tetrahydrodipicolinate (HTPA). The chain is 4-hydroxy-tetrahydrodipicolinate synthase from Neisseria meningitidis serogroup B (strain ATCC BAA-335 / MC58).